Here is a 694-residue protein sequence, read N- to C-terminus: Elongation factor G (694 aa).

The region spanning K6–T288 is the tr-type G domain. GTP-binding positions include A15 to T22, D86 to H90, and N140 to D143.

Belongs to the TRAFAC class translation factor GTPase superfamily. Classic translation factor GTPase family. EF-G/EF-2 subfamily.

The protein resides in the cytoplasm. Its function is as follows. Catalyzes the GTP-dependent ribosomal translocation step during translation elongation. During this step, the ribosome changes from the pre-translocational (PRE) to the post-translocational (POST) state as the newly formed A-site-bound peptidyl-tRNA and P-site-bound deacylated tRNA move to the P and E sites, respectively. Catalyzes the coordinated movement of the two tRNA molecules, the mRNA and conformational changes in the ribosome. The protein is Elongation factor G of Legionella pneumophila (strain Corby).